Reading from the N-terminus, the 340-residue chain is Ferredoxin--NADP reductase (340 aa).

FAD-binding residues include D33, Q41, Y46, A86, F120, D286, and T327.

Belongs to the ferredoxin--NADP reductase type 2 family. As to quaternary structure, homodimer. FAD is required as a cofactor.

The enzyme catalyses 2 reduced [2Fe-2S]-[ferredoxin] + NADP(+) + H(+) = 2 oxidized [2Fe-2S]-[ferredoxin] + NADPH. This Rickettsia rickettsii (strain Iowa) protein is Ferredoxin--NADP reductase.